The chain runs to 297 residues: Cyclin-dependent kinase 2 (297 aa).

One can recognise a Protein kinase domain in the interval 4 to 286 (FQKVEKIGEG…AKVALTHPFF (283 aa)). Residues 10-18 (IGEGTYGVV), lysine 33, 81-83 (EFL), and aspartate 86 contribute to the ATP site. Threonine 14 is modified (phosphothreonine). Tyrosine 15 is subject to Phosphotyrosine. Aspartate 127 (proton acceptor) is an active-site residue. ATP is bound by residues 129-132 (KPQN) and aspartate 145. Threonine 160 bears the Phosphothreonine; by CAK mark.

This sequence belongs to the protein kinase superfamily. CMGC Ser/Thr protein kinase family. CDC2/CDKX subfamily. In terms of assembly, interacts with spdya.

It carries out the reaction L-seryl-[protein] + ATP = O-phospho-L-seryl-[protein] + ADP + H(+). It catalyses the reaction L-threonyl-[protein] + ATP = O-phospho-L-threonyl-[protein] + ADP + H(+). Phosphorylation at Thr-14 or Tyr-15 inactivates the enzyme, while phosphorylation at Thr-160 activates it. Activated by spdya. Its function is as follows. Serine/threonine-protein kinase involved in the control of the cell cycle; essential for meiosis, but dispensable for mitosis. Triggers duplication of centrosomes and DNA. Acts at the G1-S transition to promote the E2F transcriptional program and the initiation of DNA synthesis, and modulates G2 progression; controls the timing of entry into mitosis/meiosis by controlling the subsequent activation of cyclin B/CDK1 by phosphorylation, and coordinates the activation of cyclin B/CDK1 at the centrosome and in the nucleus. Crucial role in orchestrating a fine balance between cellular proliferation, cell death, and DNA repair in embryonic stem cells (ESCs). Activity of CDK2 is maximal during S phase and G2; activated by interaction with cyclin E during the early stages of DNA synthesis to permit G1-S transition, and subsequently activated by cyclin A2 (cyclin A1 in germ cells) during the late stages of DNA replication to drive the transition from S phase to mitosis, the G2 phase. This is Cyclin-dependent kinase 2 (cdk2) from Xenopus laevis (African clawed frog).